The sequence spans 116 residues: Ribonuclease P protein component (116 aa).

Belongs to the RnpA family. Consists of a catalytic RNA component (M1 or rnpB) and a protein subunit.

It carries out the reaction Endonucleolytic cleavage of RNA, removing 5'-extranucleotides from tRNA precursor.. RNaseP catalyzes the removal of the 5'-leader sequence from pre-tRNA to produce the mature 5'-terminus. It can also cleave other RNA substrates such as 4.5S RNA. The protein component plays an auxiliary but essential role in vivo by binding to the 5'-leader sequence and broadening the substrate specificity of the ribozyme. The chain is Ribonuclease P protein component from Exiguobacterium sibiricum (strain DSM 17290 / CCUG 55495 / CIP 109462 / JCM 13490 / 255-15).